Here is a 258-residue protein sequence, read N- to C-terminus: Thiazole synthase (258 aa).

The Schiff-base intermediate with DXP role is filled by K100. 1-deoxy-D-xylulose 5-phosphate contacts are provided by residues G161, 187-188, and 209-210; these read AG and NS.

It belongs to the ThiG family. As to quaternary structure, homotetramer. Forms heterodimers with either ThiH or ThiS.

It localises to the plastid. The protein resides in the chloroplast. It carries out the reaction [ThiS sulfur-carrier protein]-C-terminal-Gly-aminoethanethioate + 2-iminoacetate + 1-deoxy-D-xylulose 5-phosphate = [ThiS sulfur-carrier protein]-C-terminal Gly-Gly + 2-[(2R,5Z)-2-carboxy-4-methylthiazol-5(2H)-ylidene]ethyl phosphate + 2 H2O + H(+). Its pathway is cofactor biosynthesis; thiamine diphosphate biosynthesis. Functionally, catalyzes the rearrangement of 1-deoxy-D-xylulose 5-phosphate (DXP) to produce the thiazole phosphate moiety of thiamine. Sulfur is provided by the thiocarboxylate moiety of the carrier protein ThiS. In vitro, sulfur can be provided by H(2)S. The protein is Thiazole synthase of Cyanidioschyzon merolae (strain NIES-3377 / 10D) (Unicellular red alga).